The sequence spans 513 residues: Probable WRKY transcription factor 3 (513 aa).

Positions M1–K11 are enriched in basic and acidic residues. Disordered stretches follow at residues M1–P26, N175–P281, and I297–S394. Over residues Q179–S201 the composition is skewed to low complexity. The segment covering L202–R228 has biased composition (polar residues). Positions E229 to S240 are enriched in basic and acidic residues. The segment at residues N244–P308 is a DNA-binding region (WRKY 1). Composition is skewed to polar residues over residues R311–N335 and T343–A355. The segment covering V368–V387 has biased composition (basic and acidic residues). A DNA-binding region (WRKY 2) is located at residues S409 to P474.

As to expression, in young, mature and senescent leaves.

The protein resides in the nucleus. Its function is as follows. Transcription factor. Interacts specifically with the W box (5'-(T)TGAC[CT]-3'), a frequently occurring elicitor-responsive cis-acting element. In Arabidopsis thaliana (Mouse-ear cress), this protein is Probable WRKY transcription factor 3 (WRKY3).